Consider the following 398-residue polypeptide: Putative F-box protein At4g17780 (398 aa).

Positions 8–55 (PSSIYIVADLLEDIFLRLPLKSILISKSVSKRWRSILESKTFVERRMS) constitute an F-box domain.

This Arabidopsis thaliana (Mouse-ear cress) protein is Putative F-box protein At4g17780.